The chain runs to 1178 residues: DNA-directed RNA polymerase subunit beta' (1178 aa).

The Zn(2+) site is built by Cys60, Cys62, Cys75, and Cys78. Residues Asp450, Asp452, and Asp454 each coordinate Mg(2+). Positions 795, 869, 876, and 879 each coordinate Zn(2+).

It belongs to the RNA polymerase beta' chain family. In terms of assembly, the RNAP catalytic core consists of 2 alpha, 1 beta, 1 beta' and 1 omega subunit. When a sigma factor is associated with the core the holoenzyme is formed, which can initiate transcription. It depends on Mg(2+) as a cofactor. Zn(2+) is required as a cofactor.

The enzyme catalyses RNA(n) + a ribonucleoside 5'-triphosphate = RNA(n+1) + diphosphate. Its function is as follows. DNA-dependent RNA polymerase catalyzes the transcription of DNA into RNA using the four ribonucleoside triphosphates as substrates. This Clostridium botulinum (strain Loch Maree / Type A3) protein is DNA-directed RNA polymerase subunit beta'.